The chain runs to 602 residues: Elongation factor 4 (602 aa).

One can recognise a tr-type G domain in the interval Glu7–Lys188. GTP contacts are provided by residues Asp19 to Thr24 and Asn135 to Asp138.

This sequence belongs to the TRAFAC class translation factor GTPase superfamily. Classic translation factor GTPase family. LepA subfamily.

The protein resides in the cell inner membrane. It catalyses the reaction GTP + H2O = GDP + phosphate + H(+). In terms of biological role, required for accurate and efficient protein synthesis under certain stress conditions. May act as a fidelity factor of the translation reaction, by catalyzing a one-codon backward translocation of tRNAs on improperly translocated ribosomes. Back-translocation proceeds from a post-translocation (POST) complex to a pre-translocation (PRE) complex, thus giving elongation factor G a second chance to translocate the tRNAs correctly. Binds to ribosomes in a GTP-dependent manner. The protein is Elongation factor 4 of Chlamydia abortus (strain DSM 27085 / S26/3) (Chlamydophila abortus).